The chain runs to 286 residues: Nucleotide-binding protein Tgr7_0722 (286 aa).

8-15 (GLSGSGKS) is a binding site for ATP. Residue 60 to 63 (DVRS) participates in GTP binding.

The protein belongs to the RapZ-like family.

Displays ATPase and GTPase activities. In Thioalkalivibrio sulfidiphilus (strain HL-EbGR7), this protein is Nucleotide-binding protein Tgr7_0722.